Consider the following 259-residue polypeptide: Thiazole synthase (259 aa).

K95 functions as the Schiff-base intermediate with DXP in the catalytic mechanism. 1-deoxy-D-xylulose 5-phosphate-binding positions include G156, A182–G183, and A204–S205.

This sequence belongs to the ThiG family. As to quaternary structure, homotetramer. Forms heterodimers with either ThiH or ThiS.

It is found in the cytoplasm. The enzyme catalyses [ThiS sulfur-carrier protein]-C-terminal-Gly-aminoethanethioate + 2-iminoacetate + 1-deoxy-D-xylulose 5-phosphate = [ThiS sulfur-carrier protein]-C-terminal Gly-Gly + 2-[(2R,5Z)-2-carboxy-4-methylthiazol-5(2H)-ylidene]ethyl phosphate + 2 H2O + H(+). It functions in the pathway cofactor biosynthesis; thiamine diphosphate biosynthesis. In terms of biological role, catalyzes the rearrangement of 1-deoxy-D-xylulose 5-phosphate (DXP) to produce the thiazole phosphate moiety of thiamine. Sulfur is provided by the thiocarboxylate moiety of the carrier protein ThiS. In vitro, sulfur can be provided by H(2)S. The protein is Thiazole synthase of Corynebacterium aurimucosum (strain ATCC 700975 / DSM 44827 / CIP 107346 / CN-1) (Corynebacterium nigricans).